The sequence spans 1413 residues: DNA-directed RNA polymerase subunit beta' (1413 aa).

4 residues coordinate Zn(2+): Cys70, Cys72, Cys85, and Cys88. The Mg(2+) site is built by Asp460, Asp462, and Asp464. Residues Cys819, Cys893, Cys900, and Cys903 each coordinate Zn(2+). The segment at 1392-1413 (EEAFDFGTPSAPAEEPQHPAAE) is disordered.

It belongs to the RNA polymerase beta' chain family. As to quaternary structure, the RNAP catalytic core consists of 2 alpha, 1 beta, 1 beta' and 1 omega subunit. When a sigma factor is associated with the core the holoenzyme is formed, which can initiate transcription. Mg(2+) serves as cofactor. It depends on Zn(2+) as a cofactor.

The enzyme catalyses RNA(n) + a ribonucleoside 5'-triphosphate = RNA(n+1) + diphosphate. DNA-dependent RNA polymerase catalyzes the transcription of DNA into RNA using the four ribonucleoside triphosphates as substrates. This Burkholderia cenocepacia (strain ATCC BAA-245 / DSM 16553 / LMG 16656 / NCTC 13227 / J2315 / CF5610) (Burkholderia cepacia (strain J2315)) protein is DNA-directed RNA polymerase subunit beta'.